A 427-amino-acid chain; its full sequence is MAMRGDPKQRRASASAPHGGAAHHVADKLRRHSTFLLLLLLLWFALSLYLFLSATPPPPRPAFLPSTSTPRPALRIYVYDLPARFNRHWVAADARCATHLFAAEVALHEALLAYAGRAARPDDATLFFVPVYVSCNFSTDNGFPSLSHARALLADAVDLVRAQMPYWNRSAGADHVFVASHDFGACFHPMEDVAIADGIPEFLKRSILLQTFGVQGTHVCQEADHVVIPPHVPPEVALELPEPEKAQRDIFAFFRGKMEVHPKNISGRFYSKKVRTELLQKYGRNRKFYLKRKRYGNYRSEMARSLFCLCPLGWAPWSPRLVESVLLGCIPVIIADDIRLPFPSVLQWLDISLQVAEKDVASLEMVLDHVVATNLTVIQKNLWDPVKRKALVFNRPMEEGDATWQVLRELEILLDRSQRRHVESWKR.

At 1 to 33 the chain is on the cytoplasmic side; it reads MAMRGDPKQRRASASAPHGGAAHHVADKLRRHS. Residues 34 to 54 form a helical; Signal-anchor for type II membrane protein membrane-spanning segment; that stretch reads TFLLLLLLLWFALSLYLFLSA. Residues 55 to 427 are Lumenal-facing; it reads TPPPPRPAFL…QRRHVESWKR (373 aa). 4 N-linked (GlcNAc...) asparagine glycosylation sites follow: Asn136, Asn168, Asn264, and Asn374.

It belongs to the glycosyltransferase 47 family.

It is found in the golgi apparatus membrane. Its function is as follows. Involved in the synthesis of glucuronoxylan hemicellulose in secondary cell walls. The sequence is that of Probable glucuronosyltransferase Os03g0107900 from Oryza sativa subsp. japonica (Rice).